Here is a 258-residue protein sequence, read N- to C-terminus: MTSCAHPHCRSQRNMNTPQKSALVVSAHSADFVWRAGGAIALHAEQGYAMHVVCLSFGERGESAKLWRKGEMTEAKVKDARREEAMAAAEILGASVEFFDIGDYPMRADKDTLFRLADVYRRVQPEFVLSHSLKDPYNYDHPLAMHLAQEARIIAQAEGYKPGEKIVGAPPVYAFEPHQPEQCEWRPDTFLDITSVWDKKYAAIQCMAGQEHLWEYYTRVALQRGVQAKRNVGITSARNIVYAEGLQSVFPRVTENLA.

The Zn(2+) site is built by H28, D31, and H141.

It belongs to the MshB deacetylase family. Zn(2+) serves as cofactor.

The enzyme catalyses 2-hydroxy-4-oxobutane-1,2,4-tricarboxylate = 4-carboxy-2-hydroxy-cis,cis-muconate + H2O. Its function is as follows. Catalyzes the conversion of oxalomesaconic acid enol (OMAenol) to 4-carboxy-4-hydroxy-2-oxoadipic acid (CHA). Mediates the third step of gallate degradation pathway. This Pseudomonas putida (strain ATCC 47054 / DSM 6125 / CFBP 8728 / NCIMB 11950 / KT2440) protein is 4-oxalmesaconate hydratase (galB).